The chain runs to 197 residues: Phosphoheptose isomerase (197 aa).

The region spanning 36–197 (LFAALANNGR…IDALLLGDTE (162 aa)) is the SIS domain. Substrate is bound at residue 51–53 (NGG). Residues histidine 60 and glutamate 64 each contribute to the Zn(2+) site. Substrate is bound by residues glutamate 64, 93-94 (ND), 119-121 (STS), serine 124, and glutamine 174. Zn(2+) contacts are provided by glutamine 174 and histidine 182.

It belongs to the SIS family. GmhA subfamily. Homotetramer. Zn(2+) is required as a cofactor.

It is found in the cytoplasm. The catalysed reaction is 2 D-sedoheptulose 7-phosphate = D-glycero-alpha-D-manno-heptose 7-phosphate + D-glycero-beta-D-manno-heptose 7-phosphate. It functions in the pathway carbohydrate biosynthesis; D-glycero-D-manno-heptose 7-phosphate biosynthesis; D-glycero-alpha-D-manno-heptose 7-phosphate and D-glycero-beta-D-manno-heptose 7-phosphate from sedoheptulose 7-phosphate: step 1/1. Catalyzes the isomerization of sedoheptulose 7-phosphate in D-glycero-D-manno-heptose 7-phosphate. The sequence is that of Phosphoheptose isomerase from Bordetella avium (strain 197N).